The sequence spans 207 residues: DNA protection during starvation protein 1 (207 aa).

Basic and acidic residues predominate over residues 1 to 12 (MTKKSTKSEAAS). Residues 1 to 31 (MTKKSTKSEAASKTKKSGVPETGAQGVRAGG) form a disordered region. Residues H83, D110, and E114 each contribute to the Fe cation site.

Belongs to the Dps family. The 12 subunits form a hollow sphere into which the mineral iron core of up to 500 Fe(3+) can be deposited. The homododecameric forms at higher concentration of salt, the homodimeric form under reducing, low-salt conditions. The assembly of the dodecamer is irreversible.

The protein resides in the cytoplasm. The protein localises to the nucleoid. It catalyses the reaction 2 Fe(2+) + H2O2 + 2 H(+) = 2 Fe(3+) + 2 H2O. Protects DNA from oxidative damage by sequestering intracellular Fe(2+) ion and storing it in the form of Fe(3+) oxyhydroxide mineral. One hydrogen peroxide oxidizes two Fe(2+) ions, which prevents hydroxyl radical production by the Fenton reaction. Both oligomeric forms of dps exhibit ferroxidase activity and DNA binding. Dodecameric dps is capable of Fe(2+) oxidation/mineralization. Only dimeric dps affords efficient DNA protection against hydroxyl radical-mediated cleavage. The polypeptide is DNA protection during starvation protein 1 (dps1) (Deinococcus radiodurans (strain ATCC 13939 / DSM 20539 / JCM 16871 / CCUG 27074 / LMG 4051 / NBRC 15346 / NCIMB 9279 / VKM B-1422 / R1)).